The chain runs to 117 residues: Large ribosomal subunit protein bL20 (117 aa).

It belongs to the bacterial ribosomal protein bL20 family.

In terms of biological role, binds directly to 23S ribosomal RNA and is necessary for the in vitro assembly process of the 50S ribosomal subunit. It is not involved in the protein synthesizing functions of that subunit. In Glaesserella parasuis serovar 5 (strain SH0165) (Haemophilus parasuis), this protein is Large ribosomal subunit protein bL20.